Consider the following 151-residue polypeptide: Large ribosomal subunit protein uL15 (151 aa).

The segment at 1 to 60 (MAENNPLKIHNLRPAPGAKTAKTRVGRGEASKGKTAGRGTKGTKARYQVPERFEGGQMPL) is disordered.

This sequence belongs to the universal ribosomal protein uL15 family. Part of the 50S ribosomal subunit.

In terms of biological role, binds to the 23S rRNA. In Streptomyces coelicolor (strain ATCC BAA-471 / A3(2) / M145), this protein is Large ribosomal subunit protein uL15.